Consider the following 257-residue polypeptide: Putative B3 domain-containing protein At2g27410 (257 aa).

The disordered stretch occupies residues 5-50 (ARTTKINHFRGTSTTQNPNRGLEPSPSSYVTRRSKEKRPINVEKRS). A compositionally biased stretch (polar residues) spans 8–35 (TKINHFRGTSTTQNPNRGLEPSPSSYVT). A DNA-binding region (TF-B3) is located at residues 115–209 (TPDFLTEDET…KLCFALTPKN (95 aa)). A disordered region spans residues 212–257 (RGNSLPGGDGASTSGESGQVPLPIPPARYSSNSGQGCSGESSSSSS). Low complexity predominate over residues 241 to 257 (SSNSGQGCSGESSSSSS).

It localises to the nucleus. This chain is Putative B3 domain-containing protein At2g27410, found in Arabidopsis thaliana (Mouse-ear cress).